Here is a 5043-residue protein sequence, read N- to C-terminus: Polyketide synthase PksJ (5043 aa).

The segment at 141–481 is adenylation 1; that stretch reads AVITDRGMHQ…ELPEIETSYT (341 aa). The region spanning 590 to 667 is the Carrier 1 domain; that stretch reads RVREEIQKHL…RLASYLSEHE (78 aa). The residue at position 627 (serine 627) is an O-(pantetheine 4'-phosphoryl)serine. A condensation region spans residues 690 to 989; it reads QATFQPLSEV…NMLPIRSELN (300 aa). The adenylation 2 stretch occupies residues 1181–1578; sequence TYRELDEKST…EHPGILECVV (398 aa). One can recognise a Carrier 2 domain in the interval 1654 to 1729; sequence TSPKNIQDTV…NISQYITEQR (76 aa). O-(pantetheine 4'-phosphoryl)serine is present on serine 1689. The Ketosynthase family 3 (KS3) 1 domain occupies 1760–2186; sequence DDSVAIIGIS…GTNTHAIFEQ (427 aa). Catalysis depends on for beta-ketoacyl synthase 1 activity residues cysteine 1932, histidine 2068, and histidine 2108. Residues 2374-2499 form an N-terminal hotdog fold region; sequence HPLLHQNTSD…GSAELASAAE (126 aa). Residues 2374–2661 enclose the PKS/mFAS DH domain; sequence HPLLHQNTSD…TRVLEGEVHT (288 aa). Histidine 2403 acts as the Proton acceptor; for dehydratase activity in catalysis. The segment at 2513 to 2661 is C-terminal hotdog fold; sequence GKGKMSPDQF…TRVLEGEVHT (149 aa). The active-site Proton donor; for dehydratase activity is aspartate 2575. Carrier domains are found at residues 3114–3188 and 3212–3286; these read RKLE…VAAY and SSLE…TVEH. An O-(pantetheine 4'-phosphoryl)serine mark is found at serine 3148 and serine 3246. A disordered region spans residues 3291 to 3314; sequence VQEREKPEGQEELQTKSSEAPKIT. The Ketosynthase family 3 (KS3) 2 domain occupies 3339–3779; sequence FEPVAIVGIS…GVNAHIVIEE (441 aa). Residues cysteine 3511, histidine 3646, and histidine 3695 each act as for beta-ketoacyl synthase 2 activity in the active site. The stretch at 3839 to 3872 forms a coiled coil; that stretch reads REEMDERLACVAGTMQELEEKLQAFVDGKEETDE. One can recognise a Carrier 5 domain in the interval 4459–4536; the sequence is GLLSETQSWL…RFADWLIGSY (78 aa). Serine 4496 is subject to O-(pantetheine 4'-phosphoryl)serine. Residues 4588–4992 form the Ketosynthase family 3 (KS3) 3 domain; it reads AEGIAVVGLS…GTNAHVIVEA (405 aa). Catalysis depends on cysteine 4743, which acts as the For beta-ketoacyl synthase 3 activity.

The protein belongs to the ATP-dependent AMP-binding enzyme family. Requires pantetheine 4'-phosphate as cofactor.

The protein localises to the cytoplasm. The protein operates within antibiotic biosynthesis; bacillaene biosynthesis. In terms of biological role, involved in some intermediate steps for the synthesis of the antibiotic polyketide bacillaene which is involved in secondary metabolism. The protein is Polyketide synthase PksJ (pksJ) of Bacillus subtilis (strain 168).